A 185-amino-acid polypeptide reads, in one-letter code: Ribosome-recycling factor (185 aa).

It belongs to the RRF family.

It localises to the cytoplasm. In terms of biological role, responsible for the release of ribosomes from messenger RNA at the termination of protein biosynthesis. May increase the efficiency of translation by recycling ribosomes from one round of translation to another. The chain is Ribosome-recycling factor from Pelobacter propionicus (strain DSM 2379 / NBRC 103807 / OttBd1).